The following is a 563-amino-acid chain: Kelch repeat and BTB domain-containing protein 1 (563 aa).

The region spanning 21 to 88 is the BTB domain; sequence CDINIVINDE…IYGIPLSLTN (68 aa). One can recognise a BACK domain in the interval 123 to 219; the sequence is CIDFYIYADK…SLLSPQVIKS (97 aa). Kelch repeat units follow at residues 252 to 297, 298 to 346, 347 to 395, 397 to 441, 442 to 492, and 494 to 538; these read IELI…VLDN, IIYM…ADDE, YIYC…MLNG, IYVI…VHAG, KIYI…SAHN, and LYVG…CEPI.

Interacts (via BTB domain) with host CUL3.

The protein resides in the host cytoplasm. In terms of biological role, probable substrate-specific adapter of CUL3-containing E3 ubiquitin-protein ligases which mediate the ubiquitination and subsequent proteasomal degradation of host target proteins. This Cowpox virus (strain Brighton Red) (CPV) protein is Kelch repeat and BTB domain-containing protein 1 (KBTB1).